A 917-amino-acid polypeptide reads, in one-letter code: Outer membrane protein SlpA (917 aa).

The signal sequence occupies residues 1–23 (MKKRLVTLLAGLLTVLSMGFGLA). One can recognise an SLH domain in the interval 24–84 (QFSDVPAGHW…QQIEEELKTQ (61 aa)).

Homotrimer.

It localises to the cell outer membrane. Functionally, plays an important role in the structural organization and integrity of the cell envelope, bridging the outer membrane to the peptidoglyan layer. Appears to be a nonselective channel. The chain is Outer membrane protein SlpA (slpA) from Thermus thermophilus (strain ATCC 27634 / DSM 579 / HB8).